The primary structure comprises 474 residues: MDKPRVRFAPSPTGYLHIGGARTALFNWLWARRNGGTFVLRIEDTDRERSTQLAVDAILDGLRWLGLDWDEGPGVGGPHPPYFQTERLDLYKAHAERLIREGKAYACYCTREELDAQRKQAEAEKRQFRYPGTCRDKPYDPSRPHVVRFRVPDAGATSWNDLVKGVISTPHDTLQDEVILRGDGVPLYNFGAVVDDITMEINLVGRGDDHVNNTARQILMYEALGYPVPTFAHFPMILGADKARLSKRHGATSVTAYRDMGFLPEAVVNYLVRLGWSHGDQELFTLDELVRYFDLKDVGATAGVFNPEKMAWVNHEWLKRRSPEELAKLALPHFRAAGLPAEDDEKLRHVCAVARERAKTLGEYVQQFRYFYAPIALDPKAKAKFLTADTRPVLQAVRDAIAALPALETQAVEQVFHGEAERRGVGLGKVAQPVRVALTGGTASPGMYDVVQILGKDETLKRLDEALRIAGEPG.

The 'HIGH' region motif lies at 10 to 20 (PSPTGYLHIGG). Zn(2+)-binding residues include C107, C109, C134, and D136. The 'KMSKS' region motif lies at 244-248 (RLSKR). Residue K247 participates in ATP binding.

The protein belongs to the class-I aminoacyl-tRNA synthetase family. Glutamate--tRNA ligase type 1 subfamily. As to quaternary structure, monomer. Requires Zn(2+) as cofactor.

The protein localises to the cytoplasm. It carries out the reaction tRNA(Glu) + L-glutamate + ATP = L-glutamyl-tRNA(Glu) + AMP + diphosphate. Functionally, catalyzes the attachment of glutamate to tRNA(Glu) in a two-step reaction: glutamate is first activated by ATP to form Glu-AMP and then transferred to the acceptor end of tRNA(Glu). This Anaeromyxobacter sp. (strain K) protein is Glutamate--tRNA ligase.